Consider the following 189-residue polypeptide: Small ribosomal subunit protein uS5 (189 aa).

One can recognise an S5 DRBM domain in the interval 23-86 (FIDKLVHINR…ESAKREMIYV (64 aa)).

Belongs to the universal ribosomal protein uS5 family. Part of the 30S ribosomal subunit. Contacts proteins S4 and S8.

With S4 and S12 plays an important role in translational accuracy. In terms of biological role, located at the back of the 30S subunit body where it stabilizes the conformation of the head with respect to the body. The polypeptide is Small ribosomal subunit protein uS5 (Bartonella bacilliformis (strain ATCC 35685 / KC583 / Herrer 020/F12,63)).